Here is a 138-residue protein sequence, read N- to C-terminus: Probable lactoylglutathione lyase (138 aa).

Residues 5–129 (RILHTMLRVG…DGYMIELIQN (125 aa)) enclose the VOC domain. Position 8 (H8) interacts with Ni(2+). R12 is a substrate binding site. E59 contributes to the Ni(2+) binding site. Residues N63 and H77 each coordinate substrate. The Ni(2+) site is built by H77 and E125. The active-site Proton donor/acceptor is the E125.

This sequence belongs to the glyoxalase I family. The cofactor is Ni(2+).

The enzyme catalyses (R)-S-lactoylglutathione = methylglyoxal + glutathione. The protein operates within secondary metabolite metabolism; methylglyoxal degradation; (R)-lactate from methylglyoxal: step 1/2. Its function is as follows. Catalyzes the conversion of hemimercaptal, formed from methylglyoxal and glutathione, to S-lactoylglutathione. The sequence is that of Probable lactoylglutathione lyase (gloA) from Vibrio parahaemolyticus serotype O3:K6 (strain RIMD 2210633).